A 7354-amino-acid chain; its full sequence is Microtubule-actin cross-linking factor 1, isoforms 1/2/3/4 (7354 aa).

A disordered region spans residues 1–47 (MSSSDEETLSERSCRSERSCRSERSYRSERSGSLSPCPPGDTLPWNL). The tract at residues 1–295 (MSSSDEETLS…VITYVSSIYD (295 aa)) is actin-binding. Serine 4 is subject to Phosphoserine. Over residues 9–30 (LSERSCRSERSCRSERSYRSER) the composition is skewed to basic and acidic residues. The residue at position 35 (serine 35) is a Phosphoserine. Threonine 42 carries the phosphothreonine modification. Phosphoserine is present on serine 57. Calponin-homology (CH) domains are found at residues 78 to 181 (RVQK…LHFQ) and 194 to 298 (MSAK…DAFP). The stretch at 148–171 (QRQVKLVNIRNDDITDGNPKLTLG) is one LRR 1 repeat. Residue serine 280 is modified to Phosphoserine. 2 LRR repeats span residues 377–399 (LYKL…YHPN) and 441–464 (LNCE…LESG). Positions 868–925 (KSTLSVKAICDYRQIEITICKNDECVLEDNSQRTKWKVISPTGNEAMVPSVCFLIPPP) constitute an SH3 domain. Residues 1050–1073 (ISELKNIRLLLEECEQRLLKQIQS) form an LRR 5 repeat. Position 1122 is a phosphoserine (serine 1122). LRR repeat units follow at residues 1128–1154 (ATTL…VYLN), 1187–1210 (PADL…VKDK), and 1257–1282 (HRVI…DYRA). A phosphoserine mark is found at serine 1367 and serine 1376. Plectin repeat units lie at residues 1577–1619 (LVLL…QLLG), 1654–1696 (LKVL…ELQS), 1769–1809 (RLLE…CAIL), 1811–1848 (RQLQ…VILE), and 1855–1885 (GLLL…HKIL). Residues serine 2051, serine 2077, and serine 2081 each carry the phosphoserine modification. Composition is skewed to basic and acidic residues over residues 2120-2131 (KEEQAETLREEN) and 2145-2155 (SEGKDLSTEKS). The tract at residues 2120 to 2155 (KEEQAETLREENISGDPLLVECPEESEGKDLSTEKS) is disordered. Plectin repeat units follow at residues 2276 to 2316 (STLS…VKLM), 2352 to 2393 (NVLM…RILE), 2394 to 2425 (GQVI…DTAD), 2487 to 2528 (LLTK…LRKV), and 2671 to 2715 (LKVL…ASHQ). 3 disordered regions span residues 2806–2841 (AGIR…DSKV), 2951–2978 (EMGG…EVTI), and 3058–3099 (SQET…HISK). Positions 2812-2837 (NGEKAEKGRKISVEMEGQRQDEKASS) are enriched in basic and acidic residues. Over residues 2968–2978 (SEEESDQEVTI) the composition is skewed to acidic residues. Phosphoserine occurs at positions 3082 and 3085. LRR repeat units follow at residues 3225 to 3244 (VGQR…LPTR), 3606 to 3630 (SGKS…IQSH), and 3657 to 3681 (LTAL…TRVA). Spectrin repeat units follow at residues 3845-3920 (ELQK…NFEE) and 3962-4070 (QYQQ…ALLQ). Serine 3889 carries the phosphoserine modification. Residues 3898-3920 (KGDLRFVTISGQKVLETENNFEE) form an LRR 12 repeat. 2 LRR repeats span residues 4087-4112 (LQSI…VIQE) and 4223-4249 (IQEL…TLGS). Residues 4428–4536 (RMEEVQKEAS…TVARQKQLEE (109 aa)) form a Spectrin 3 repeat. Phosphoserine is present on residues serine 4458 and serine 4483. 3 LRR repeats span residues 4473 to 4496 (KAFL…LAGL), 4563 to 4583 (GVLG…QFML), and 4728 to 4751 (KKRL…RMNR). The stretch at 4759-4863 (TQQFQQMFDE…KTANRQSRLK (105 aa)) is one Spectrin 4 repeat. A Phosphoserine modification is found at serine 4921. LRR repeat units lie at residues 5010-5035 (NKNL…YLRN), 5131-5153 (NKIQ…MLEE), and 5240-5263 (KDQV…LIQS). 13 Spectrin repeats span residues 5195–5300 (EDFY…QLQE), 5307–5409 (KFQD…QLED), 5414–5506 (AKQF…ADIT), 5631–5735 (RSQQ…ARLE), 5742–5844 (NQFW…ALDE), 5961–6066 (LAEK…KLED), 6071–6175 (AVQY…HKLE), 6181–6284 (LGQF…QQLQ), 6289–6395 (QAQG…KLEE), 6400–6503 (ATEF…RSLD), 6508–6614 (RAKQ…KLEE), 6621–6722 (QFMD…RLEQ), and 6726–6830 (QAEE…QRLE). At threonine 5394 the chain carries Phosphothreonine. 2 LRR repeats span residues 5654–5678 (MALG…AFSI) and 5763–5787 (AQLP…QLRE). At serine 5988 the chain carries Phosphoserine. At lysine 6166 the chain carries N6-acetyllysine. One copy of the LRR 23 repeat lies at 6452-6475 (RDQIIELDQTGNQLKFLSQKQDVV). The tract at residues 6904–6937 (SVEPTHAPFMEKSRSGSRKSLNQPTPPPMPILSQ) is disordered. Serine 6923 bears the Phosphoserine mark. EF-hand domains follow at residues 7001–7036 (HKKS…SKFP) and 7037–7072 (TTKL…NKDA). Ca(2+) is bound by residues aspartate 7014, aspartate 7016, aspartate 7018, lysine 7020, glutamate 7025, aspartate 7050, aspartate 7052, aspartate 7054, tyrosine 7056, and glutamate 7061. The region spanning 7077–7155 (TDADKIEDEV…EFLVKNDPCR (79 aa)) is the GAR domain. The C-terminal tail stretch occupies residues 7077–7354 (TDADKIEDEV…ASPRTPGPKR (278 aa)). Positions 7171–7354 (PEGASQGMTP…ASPRTPGPKR (184 aa)) are disordered. The segment covering 7191-7225 (SSRAASPTRSSSSASQSNHSCTSMPSSPATPASGT) has biased composition (low complexity). Threonine 7220 is modified (phosphothreonine). A compositionally biased stretch (polar residues) spans 7242–7261 (FHSSRTSLAGDTSNSSSPAS). Phosphoserine occurs at positions 7245 and 7258. The span at 7276–7290 (SRPGSRAGSRAGSRA) shows a compositional bias: low complexity. The tract at residues 7279–7294 (GSRAGSRAGSRASSRR) is 4 X 4 AA tandem repeats of [GS]-S-R-[AR]. Residues serine 7296 and serine 7299 each carry the phosphoserine modification. A compositionally biased stretch (polar residues) spans 7305–7315 (ETQSACSDTSE). Residues 7316 to 7327 (SSAAGGQGSSRR) show a composition bias toward low complexity.

Belongs to the plakin or cytolinker family. In terms of assembly, interacts with AXIN1, LRP6 and GOLGA4. Found in a complex composed of MACF1, APC, AXIN1, CTNNB1 and GSK3B. Interacts with MAPRE1, CLASP1 and CLASP2. Interacts with CAMSAP3. In terms of processing, phosphorylated on serine residues in the C-terminal tail by GSK3B. Phosphorylation inhibits microtubule-binding and this plays a critical role in bulge stem cell migration and skin wound repair. Wnt-signaling can repress phosphorylation. Enriched in the hair follicle stem cells (at protein level). Isoform 1 and isoform 2 are ubiquitous expressed, with higher levels seen in lung, heart, thymus, spleen and brain.

It localises to the cytoplasm. It is found in the cytoskeleton. The protein resides in the golgi apparatus. Its subcellular location is the cell membrane. The protein localises to the cell projection. It localises to the ruffle membrane. In terms of biological role, F-actin-binding protein which plays a role in cross-linking actin to other cytoskeletal proteins and also binds to microtubules. Plays an important role in ERBB2-dependent stabilization of microtubules at the cell cortex. Acts as a positive regulator of Wnt receptor signaling pathway and is involved in the translocation of AXIN1 and its associated complex (composed of APC, CTNNB1 and GSK3B) from the cytoplasm to the cell membrane. Has actin-regulated ATPase activity and is essential for controlling focal adhesions (FAs) assembly and dynamics. Interaction with CAMSAP3 at the minus ends of non-centrosomal microtubules tethers microtubules minus-ends to actin filaments, regulating focal adhesion size and cell migration. May play role in delivery of transport vesicles containing GPI-linked proteins from the trans-Golgi network through its interaction with GOLGA4. Plays a key role in wound healing and epidermal cell migration. Required for efficient upward migration of bulge cells in response to wounding and this function is primarily rooted in its ability to coordinate microtubule dynamics and polarize hair follicle stem cells. As a regulator of actin and microtubule arrangement and stabilization, it plays an essential role in neurite outgrowth, branching and spine formation during brain development. This chain is Microtubule-actin cross-linking factor 1, isoforms 1/2/3/4, found in Mus musculus (Mouse).